Here is a 457-residue protein sequence, read N- to C-terminus: NADH-ubiquinone oxidoreductase chain 4 (457 aa).

12 helical membrane passes run 22–42 (NLWP…IALI), 59–79 (SMQL…LIAS), 95–115 (IVLV…LELI), 116–136 (LFYI…TRWG), 148–168 (FIFY…ALYF), 191–211 (LTVW…IYGF), 223–243 (PVAG…YGLM), 257–277 (SSLP…IICI), 282–302 (LKAL…AGVF), 309–329 (INGA…LFAL), 350–370 (LILP…LGFP), and 433–453 (LFLL…LVLI).

Belongs to the complex I subunit 4 family.

Its subcellular location is the mitochondrion membrane. The enzyme catalyses a ubiquinone + NADH + 5 H(+)(in) = a ubiquinol + NAD(+) + 4 H(+)(out). In terms of biological role, core subunit of the mitochondrial membrane respiratory chain NADH dehydrogenase (Complex I) that is believed to belong to the minimal assembly required for catalysis. Complex I functions in the transfer of electrons from NADH to the respiratory chain. The immediate electron acceptor for the enzyme is believed to be ubiquinone. This is NADH-ubiquinone oxidoreductase chain 4 (ND4) from Arbacia lixula (Black urchin).